The following is a 191-amino-acid chain: Ion-translocating oxidoreductase complex subunit B (191 aa).

Residues 1 to 26 are hydrophobic; sequence MSSLWIAIAAVSAIALVSGLILGFAA. The region spanning 32–90 is the 4Fe-4S domain; that stretch reads EADPIVERIDALLPQSQCGQCGYPGCRPYAEAVANGEKINRCAPGGEAVMRNIAALLAV. Residues cysteine 49, cysteine 52, cysteine 57, cysteine 73, cysteine 116, cysteine 119, cysteine 122, cysteine 126, cysteine 146, cysteine 149, cysteine 152, and cysteine 156 each coordinate [4Fe-4S] cluster. 2 consecutive 4Fe-4S ferredoxin-type domains span residues 107–136 and 137–166; these read QVAL…GATR and ALHT…LVPV.

Belongs to the 4Fe4S bacterial-type ferredoxin family. RnfB subfamily. As to quaternary structure, the complex is composed of six subunits: RnfA, RnfB, RnfC, RnfD, RnfE and RnfG. [4Fe-4S] cluster is required as a cofactor.

It localises to the cell inner membrane. In terms of biological role, part of a membrane-bound complex that couples electron transfer with translocation of ions across the membrane. This Edwardsiella ictaluri (strain 93-146) protein is Ion-translocating oxidoreductase complex subunit B.